The primary structure comprises 1030 residues: FACT complex subunit spt-16 (1030 aa).

Residues 424–445 (RLKSNVIKFKEEQENREAEKDN) are a coiled coil. Basic and acidic residues-rich tracts occupy residues 435–449 (EQENREAEKDNDQKK) and 464–477 (TRNKTTNEELRKER). Disordered stretches follow at residues 435 to 477 (EQEN…RKER) and 491 to 514 (ARLSKQGGGTDEKKSKKSNVSYKT). Residues 623–645 (RLIKEMQKRFKTEEAEEREKEGA) adopt a coiled-coil conformation. Positions 927–1030 (VESDNEEAMD…KSGPSHKRRK (104 aa)) are disordered. Acidic residues-rich tracts occupy residues 929–951 (SDNEEAMDDSDDSDAYDPEEEDA) and 958–983 (ESDEDESEGEETESDDDDEGSLDSDE). Residues 987–1007 (KDWSDLEEEAANADKRREVEE) are a coiled coil. Over residues 998–1014 (NADKRREVEEPSRDRDR) the composition is skewed to basic and acidic residues. The span at 1015–1030 (KRPHSSKSGPSHKRRK) shows a compositional bias: basic residues.

Belongs to the peptidase M24 family. SPT16 subfamily. As to quaternary structure, component of the FACT complex, a stable heterodimer of spt-16 and hmg-3 or hmg-4. As to expression, expressed in the germline and somatic cells.

Its subcellular location is the nucleus. It is found in the chromosome. Functionally, component of the FACT complex, a general chromatin factor that acts to reorganize nucleosomes. The FACT complex is involved in multiple processes that require DNA as a template such as mRNA elongation, DNA replication and DNA repair. During transcription elongation the FACT complex acts as a histone chaperone that both destabilizes and restores nucleosomal structure. It facilitates the passage of RNA polymerase II and transcription by promoting the dissociation of one histone H2A-H2B dimer from the nucleosome, then subsequently promotes the reestablishment of the nucleosome following the passage of RNA polymerase II. In embryos, promotes cell cycle progression and chromosomal segregation. Plays a role in the development of the anterior pharynx during embryonic development. This Caenorhabditis elegans protein is FACT complex subunit spt-16.